Here is a 132-residue protein sequence, read N- to C-terminus: Fatty acid-binding protein, intestinal (132 aa).

A2 carries the N-acetylalanine modification. Residues W83 and R107 each contribute to the hexadecanoate site. Residues W83 and R107 each contribute to the tetradecanoate site.

It belongs to the calycin superfamily. Fatty-acid binding protein (FABP) family. Expressed in the small intestine and at much lower levels in the large intestine. Highest expression levels in the jejunum.

The protein resides in the cytoplasm. FABPs are thought to play a role in the intracellular transport of long-chain fatty acids and their acyl-CoA esters. FABP2 is probably involved in triglyceride-rich lipoprotein synthesis. Binds saturated long-chain fatty acids with a high affinity, but binds with a lower affinity to unsaturated long-chain fatty acids. FABP2 may also help maintain energy homeostasis by functioning as a lipid sensor. This Homo sapiens (Human) protein is Fatty acid-binding protein, intestinal (FABP2).